Reading from the N-terminus, the 360-residue chain is Nucleoporin SEH1 (360 aa).

WD repeat units follow at residues 10–49, 55–96, 111–152, 160–210, 217–258, and 276–315; these read DHKDLIHDVSFDFHGRRMATCSSDQSVKVWDKSESGEWHC, THSG…SNDK, DSRT…NLSQ, SCKL…RKYA, TVTD…KELT, and NHNSQVWRVSWNITGTVLASSGDDGCVRLWKANYMDNWKC. Lysine 12 participates in a covalent cross-link: Glycyl lysine isopeptide (Lys-Gly) (interchain with G-Cter in SUMO2). Serine 190 is modified (phosphoserine). A compositionally biased stretch (low complexity) spans 324–342; that stretch reads SPVNGSSQQGNSNPSVGSN. A disordered region spans residues 324–360; sequence SPVNGSSQQGNSNPSVGSNIPSLQNSLNGSSAGRKHS. Residues 343–354 are compositionally biased toward polar residues; that stretch reads IPSLQNSLNGSS.

It belongs to the WD repeat SEC13 family. In terms of assembly, component of the Nup107-160 subcomplex of the nuclear pore complex (NPC). The Nup107-160 subcomplex includes NUP160, NUP133, NUP107, NUP98, NUP85, NUP43, NUP37, SEH1 and SEC13. The SEH1 subunit appears to be only weakly associated with the Nup107-160 subcomplex. Component of the GATOR2 subcomplex, composed of MIOS, SEC13, SEH1L, WDR24 and WDR59. The GATOR2 complex interacts with CASTOR1 and CASTOR2; the interaction is negatively regulated by arginine. The GATOR2 complex interacts with SESN1, SESN2 and SESN3; the interaction is negatively regulated by amino acids. SESN1, SESN2 and SESN3 convey leucine availability via direct interaction with SEH1L and WDR24.

The protein localises to the chromosome. It is found in the centromere. The protein resides in the kinetochore. It localises to the nucleus. Its subcellular location is the nuclear pore complex. The protein localises to the lysosome membrane. Its activity is regulated as follows. The GATOR2 complex is negatively regulated by the upstream amino acid sensors CASTOR1 and SESN2, which sequester the GATOR2 complex in absence of amino acids. In the presence of abundant amino acids, GATOR2 is released from CASTOR1 and SESN2 and activated. Functionally, component of the Nup107-160 subcomplex of the nuclear pore complex (NPC). The Nup107-160 subcomplex is required for the assembly of a functional NPC. The Nup107-160 subcomplex is also required for normal kinetochore microtubule attachment, mitotic progression and chromosome segregation. This subunit plays a role in recruitment of the Nup107-160 subcomplex to the kinetochore. As a component of the GATOR2 complex, functions as an activator of the amino acid-sensing branch of the mTORC1 signaling pathway. The GATOR2 complex indirectly activates mTORC1 through the inhibition of the GATOR1 subcomplex. GATOR2 probably acts as an E3 ubiquitin-protein ligase toward GATOR1. In the presence of abundant amino acids, the GATOR2 complex mediates ubiquitination of the NPRL2 core component of the GATOR1 complex, leading to GATOR1 inactivation. In the absence of amino acids, GATOR2 is inhibited, activating the GATOR1 complex. Within the GATOR2 complex, SEC13 and SEH1L are required to stabilize the complex. The protein is Nucleoporin SEH1 (SEH1L) of Bos taurus (Bovine).